A 315-amino-acid chain; its full sequence is Shiga-like toxin 1 subunit A (315 aa).

A signal peptide spans Met1–Ala22. Residues Lys23 to Arg273 are A1. Residue Glu189 is part of the active site. Cysteines 264 and 283 form a disulfide. The tract at residues Met274–Ser315 is A2.

It belongs to the ribosome-inactivating protein family. As to quaternary structure, shiga-like toxin contains a single subunit A and five copies of subunit B.

The protein localises to the secreted. It catalyses the reaction Endohydrolysis of the N-glycosidic bond at one specific adenosine on the 28S rRNA.. The A subunit is responsible for inhibiting protein synthesis through the catalytic inactivation of 60S ribosomal subunits. After endocytosis, the A subunit is cleaved by furin in two fragments, A1 and A2: A1 is the catalytically active fragment, and A2 is essential for holotoxin assembly with the B subunits. The protein is Shiga-like toxin 1 subunit A (stxA) of Escherichia coli (Bacteriophage H19B).